Reading from the N-terminus, the 95-residue chain is Succinate dehydrogenase membrane anchor subunit (95 aa).

At 1 to 19 (MYKTLLAQVFFHSIAKKKL) the chain is on the mitochondrial matrix side. Residues 20–40 (YFFWLPRLFSLLLVPGFLFDI) traverse the membrane as a helical segment. A topological domain (mitochondrial intermembrane) is located at residue Glu-41. Residues 42–62 (ILFLFHPIILLHASLGLSVII) traverse the membrane as a helical segment. His-53 provides a ligand contact to heme. Residues 63 to 74 (EDYIHIETIKFQ) lie on the Mitochondrial matrix side of the membrane. Residue Tyr-65 participates in a ubiquinone binding. Residues 75–95 (YLSLIKLLLVLLINLNILYLL) traverse the membrane as a helical segment.

Part of an enzyme complex containing four subunits: a flavoprotein, an iron-sulfur protein, plus two membrane-anchoring proteins. Heme is required as a cofactor.

It is found in the mitochondrion inner membrane. It participates in carbohydrate metabolism; tricarboxylic acid cycle. In terms of biological role, membrane-anchoring subunit of succinate dehydrogenase (SDH). This Porphyra purpurea (Red seaweed) protein is Succinate dehydrogenase membrane anchor subunit (SDH4).